Here is a 218-residue protein sequence, read N- to C-terminus: Translation initiation factor 6 (218 aa).

This sequence belongs to the eIF-6 family.

Functionally, binds to the 50S ribosomal subunit and prevents its association with the 30S ribosomal subunit to form the 70S initiation complex. The chain is Translation initiation factor 6 from Methanosarcina acetivorans (strain ATCC 35395 / DSM 2834 / JCM 12185 / C2A).